The primary structure comprises 757 residues: Maltose phosphorylase (757 aa).

354-355 (WD) lines the substrate pocket. The active-site Proton donor is Glu483. Substrate is bound at residue 588-589 (KQ).

This sequence belongs to the glycosyl hydrolase 65 family.

It carries out the reaction D-maltose + phosphate = beta-D-glucose 1-phosphate + D-glucose. Its pathway is glycan degradation; maltose degradation. Functionally, catalyzes the phosphorolysis of maltose, leading to the formation of glucose and glucose 1-P. This chain is Maltose phosphorylase (mdxK), found in Bacillus subtilis (strain 168).